The primary structure comprises 105 residues: Probable molt-inhibiting hormone (105 aa).

The first 28 residues, 1-28 (MYRMPMRFWLTAVVMVVVGALLLDTASA), serve as a signal peptide directing secretion. 3 disulfides stabilise this stretch: C35–C72, C52–C68, and C55–C81.

The protein belongs to the arthropod CHH/MIH/GIH/VIH hormone family. As to expression, expressed in the postmolt, intermolt, and premolt stages of the shrimp eyestalks and the brain.

It is found in the secreted. In terms of biological role, inhibits Y-organs where molting hormone (ecdysteroid) is secreted. A molting cycle is initiated when MIH secretion diminishes or stops. The polypeptide is Probable molt-inhibiting hormone (Metapenaeus ensis (Greasyback shrimp)).